A 139-amino-acid polypeptide reads, in one-letter code: SPbeta prophage-derived uncharacterized protein YomN (139 aa).

The chain is SPbeta prophage-derived uncharacterized protein YomN (yomN) from Bacillus subtilis (strain 168).